The chain runs to 358 residues: Magnesium-protoporphyrin IX monomethyl ester [oxidative] cyclase 1 (358 aa).

It belongs to the AcsF family. The cofactor is Fe cation.

It catalyses the reaction Mg-protoporphyrin IX 13-monomethyl ester + 3 NADPH + 3 O2 + 2 H(+) = 3,8-divinyl protochlorophyllide a + 3 NADP(+) + 5 H2O. It functions in the pathway porphyrin-containing compound metabolism; chlorophyll biosynthesis (light-independent). Functionally, catalyzes the formation of the isocyclic ring in chlorophyll biosynthesis. Mediates the cyclase reaction, which results in the formation of divinylprotochlorophyllide (Pchlide) characteristic of all chlorophylls from magnesium-protoporphyrin IX 13-monomethyl ester (MgPMME). The sequence is that of Magnesium-protoporphyrin IX monomethyl ester [oxidative] cyclase 1 from Synechocystis sp. (strain ATCC 27184 / PCC 6803 / Kazusa).